The primary structure comprises 1916 residues: Diacylglycerol kinase eta (1916 aa).

A disordered region spans residues 1–36 (MAHIKLDTLDVVQRPGTTRRSNSNSGRSSACSSGSL). Residues 19–36 (RRSNSNSGRSSACSSGSL) show a composition bias toward low complexity. The PH domain maps to 82–175 (AIIKEGFLLK…WLGSLKTATT (94 aa)). 2 consecutive Phorbol-ester/DAG-type zinc fingers follow at residues 195-245 (HHHW…IANC) and 268-319 (PHQW…AVAC). Positions 350–486 (GNFSPLLVFV…DRWSIMVFEK (137 aa)) constitute a DAGKc domain. A compositionally biased stretch (basic and acidic residues) spans 623–644 (DEINTKERRSSRSLRSSEKEAL). Disordered stretches follow at residues 623–648 (DEIN…QSRA), 846–874 (DRGK…KEDN), 1018–1067 (TLCS…DDNP), and 1183–1214 (TSTS…SVKP). The 64-residue stretch at 1853–1916 (WSVNEVVTWL…LQAIKDLSEN (64 aa)) folds into the SAM domain.

It belongs to the eukaryotic diacylglycerol kinase family.

The protein resides in the cytoplasm. The catalysed reaction is a 1,2-diacyl-sn-glycerol + ATP = a 1,2-diacyl-sn-glycero-3-phosphate + ADP + H(+). Functionally, phosphorylates diacylglycerol (DAG) to generate phosphatidic acid (PA). The polypeptide is Diacylglycerol kinase eta (Drosophila ananassae (Fruit fly)).